Consider the following 343-residue polypeptide: Dihydroorotate dehydrogenase (quinone) (343 aa).

Residues 65 to 69 and Thr-89 contribute to the FMN site; that span reads AGFDK. Lys-69 provides a ligand contact to substrate. 114–118 serves as a coordination point for substrate; it reads NRMGF. FMN is bound by residues Asn-145 and Asn-178. Substrate is bound at residue Asn-178. The active-site Nucleophile is Ser-181. Asn-183 contributes to the substrate binding site. Residues Lys-215 and Thr-243 each coordinate FMN. Residue 244 to 245 participates in substrate binding; it reads NT. Residues Gly-269, Gly-298, and 319–320 contribute to the FMN site; that span reads YT.

Belongs to the dihydroorotate dehydrogenase family. Type 2 subfamily. In terms of assembly, monomer. It depends on FMN as a cofactor.

The protein resides in the cell membrane. The catalysed reaction is (S)-dihydroorotate + a quinone = orotate + a quinol. Its pathway is pyrimidine metabolism; UMP biosynthesis via de novo pathway; orotate from (S)-dihydroorotate (quinone route): step 1/1. Catalyzes the conversion of dihydroorotate to orotate with quinone as electron acceptor. In Leifsonia xyli subsp. xyli (strain CTCB07), this protein is Dihydroorotate dehydrogenase (quinone).